Consider the following 271-residue polypeptide: Sorting nexin-11 (271 aa).

The 117-residue stretch at Val16–Val132 folds into the PX domain. Residues Arg59, Lys85, and Arg99 each contribute to the a 1,2-diacyl-sn-glycero-3-phospho-(1D-myo-inositol-3-phosphate) site. The important for membrane trafficking stretch occupies residues Ile135–Val139. The interval Pro185–Lys271 is disordered. A compositionally biased stretch (low complexity) spans Ser213–Pro230.

The protein belongs to the sorting nexin family. In terms of assembly, monomer. Interacts with TRPV3; this interaction promotes TRPV3 trafficking from the cell membrane to lysosome for degradation.

The protein resides in the cell membrane. Its subcellular location is the endosome. It localises to the cytoplasm. Phosphoinositide-binding protein involved in protein sorting and membrane trafficking in endosomes. Regulates the levels of TRPV3 by promoting its trafficking from the cell membrane to lysosome for degradation. The protein is Sorting nexin-11 (Snx11) of Mus musculus (Mouse).